Reading from the N-terminus, the 136-residue chain is Large ribosomal subunit protein uL16 (136 aa).

Belongs to the universal ribosomal protein uL16 family. In terms of assembly, part of the 50S ribosomal subunit.

Its function is as follows. Binds 23S rRNA and is also seen to make contacts with the A and possibly P site tRNAs. This chain is Large ribosomal subunit protein uL16, found in Rickettsia felis (strain ATCC VR-1525 / URRWXCal2) (Rickettsia azadi).